Here is a 122-residue protein sequence, read N- to C-terminus: uncharacterized protein (122 aa).

The stretch at 46 to 116 forms a coiled coil; the sequence is KDLQKEVDDL…HQLENKRELN (71 aa).

This is an uncharacterized protein from Invertebrate iridescent virus 6 (IIV-6).